A 126-amino-acid chain; its full sequence is Large ribosomal subunit protein bL19 (126 aa).

It belongs to the bacterial ribosomal protein bL19 family.

This protein is located at the 30S-50S ribosomal subunit interface and may play a role in the structure and function of the aminoacyl-tRNA binding site. The sequence is that of Large ribosomal subunit protein bL19 from Bordetella bronchiseptica (strain ATCC BAA-588 / NCTC 13252 / RB50) (Alcaligenes bronchisepticus).